The following is a 208-amino-acid chain: Imidazoleglycerol-phosphate dehydratase (208 aa).

Residues 1–22 (MTRRAAVKAPRAGAAARRGSVA) are disordered. Residues 7 to 19 (VKAPRAGAAARRG) show a composition bias toward low complexity.

The protein belongs to the imidazoleglycerol-phosphate dehydratase family.

It localises to the cytoplasm. It catalyses the reaction D-erythro-1-(imidazol-4-yl)glycerol 3-phosphate = 3-(imidazol-4-yl)-2-oxopropyl phosphate + H2O. The protein operates within amino-acid biosynthesis; L-histidine biosynthesis; L-histidine from 5-phospho-alpha-D-ribose 1-diphosphate: step 6/9. The chain is Imidazoleglycerol-phosphate dehydratase from Anaeromyxobacter dehalogenans (strain 2CP-C).